The following is a 114-amino-acid chain: Biofilm growth-associated repressor (114 aa).

Positions 17-111 (DMEKRANEVA…ALYTIFCTQE (95 aa)) constitute an HTH arsR-type domain. Residues 51–74 (VGELEQQIGIGQPTLSQQLGVLRE) constitute a DNA-binding region (H-T-H motif).

Its function is as follows. Represses an operon that probably comprises itself, PD_1892, PD_1893, PD_1894 and blh. Binds to a palindromic AT-rich sequence spanning the -10 region of the blh promoter and blocks transcription of the operon. The protein is Biofilm growth-associated repressor (bigR) of Xylella fastidiosa (strain Temecula1 / ATCC 700964).